Consider the following 427-residue polypeptide: 4-hydroxy-3-methylbut-2-en-1-yl diphosphate synthase (flavodoxin) (427 aa).

Residues 1–21 (MNKLENTIDSDIAGPAPRHRT) form a disordered region. Positions 310, 313, 356, and 363 each coordinate [4Fe-4S] cluster.

Belongs to the IspG family. It depends on [4Fe-4S] cluster as a cofactor.

It catalyses the reaction (2E)-4-hydroxy-3-methylbut-2-enyl diphosphate + oxidized [flavodoxin] + H2O + 2 H(+) = 2-C-methyl-D-erythritol 2,4-cyclic diphosphate + reduced [flavodoxin]. Its pathway is isoprenoid biosynthesis; isopentenyl diphosphate biosynthesis via DXP pathway; isopentenyl diphosphate from 1-deoxy-D-xylulose 5-phosphate: step 5/6. Functionally, converts 2C-methyl-D-erythritol 2,4-cyclodiphosphate (ME-2,4cPP) into 1-hydroxy-2-methyl-2-(E)-butenyl 4-diphosphate. The sequence is that of 4-hydroxy-3-methylbut-2-en-1-yl diphosphate synthase (flavodoxin) from Bradyrhizobium diazoefficiens (strain JCM 10833 / BCRC 13528 / IAM 13628 / NBRC 14792 / USDA 110).